The sequence spans 232 residues: 5'-methylthioadenosine/S-adenosylhomocysteine nucleosidase (232 aa).

Glu12 functions as the Proton acceptor in the catalytic mechanism. Residues Gly78, Ile152, and 173–174 each bind substrate; that span reads ME. Asp197 acts as the Proton donor in catalysis.

It belongs to the PNP/UDP phosphorylase family. MtnN subfamily. As to quaternary structure, homodimer.

It carries out the reaction S-adenosyl-L-homocysteine + H2O = S-(5-deoxy-D-ribos-5-yl)-L-homocysteine + adenine. It catalyses the reaction S-methyl-5'-thioadenosine + H2O = 5-(methylsulfanyl)-D-ribose + adenine. The catalysed reaction is 5'-deoxyadenosine + H2O = 5-deoxy-D-ribose + adenine. Its pathway is amino-acid biosynthesis; L-methionine biosynthesis via salvage pathway; S-methyl-5-thio-alpha-D-ribose 1-phosphate from S-methyl-5'-thioadenosine (hydrolase route): step 1/2. In terms of biological role, catalyzes the irreversible cleavage of the glycosidic bond in both 5'-methylthioadenosine (MTA) and S-adenosylhomocysteine (SAH/AdoHcy) to adenine and the corresponding thioribose, 5'-methylthioribose and S-ribosylhomocysteine, respectively. Also cleaves 5'-deoxyadenosine, a toxic by-product of radical S-adenosylmethionine (SAM) enzymes, into 5-deoxyribose and adenine. Thus, is required for in vivo function of the radical SAM enzymes biotin synthase and lipoic acid synthase, that are inhibited by 5'-deoxyadenosine accumulation. The sequence is that of 5'-methylthioadenosine/S-adenosylhomocysteine nucleosidase from Citrobacter koseri (strain ATCC BAA-895 / CDC 4225-83 / SGSC4696).